A 314-amino-acid chain; its full sequence is 2,3,4,5-tetrahydropyridine-2,6-dicarboxylate N-succinyltransferase (314 aa).

2 residues coordinate Mg(2+): Asp-163 and Glu-180. Catalysis depends on Glu-196, which acts as the Acyl-anhydride intermediate. Succinyl-CoA contacts are provided by residues Arg-198, Gly-213, Ser-216, Ala-239, 254–255 (EA), Gly-262, Lys-274, and 287–290 (RRNS).

This sequence belongs to the type 2 tetrahydrodipicolinate N-succinyltransferase family. In terms of assembly, homotrimer.

It localises to the cytoplasm. The catalysed reaction is (S)-2,3,4,5-tetrahydrodipicolinate + succinyl-CoA + H2O = (S)-2-succinylamino-6-oxoheptanedioate + CoA. Its pathway is amino-acid biosynthesis; L-lysine biosynthesis via DAP pathway; LL-2,6-diaminopimelate from (S)-tetrahydrodipicolinate (succinylase route): step 1/3. In terms of biological role, catalyzes the conversion of the cyclic tetrahydrodipicolinate (THDP) into the acyclic N-succinyl-L-2-amino-6-oxopimelate using succinyl-CoA. The protein is 2,3,4,5-tetrahydropyridine-2,6-dicarboxylate N-succinyltransferase of Mycolicibacterium smegmatis (strain ATCC 700084 / mc(2)155) (Mycobacterium smegmatis).